A 224-amino-acid polypeptide reads, in one-letter code: 7-cyano-7-deazaguanine synthase (224 aa).

12–22 (LSGGLDSSTVT) lines the ATP pocket. Zn(2+) is bound by residues C193, C201, C204, and C207.

This sequence belongs to the QueC family. Requires Zn(2+) as cofactor.

It catalyses the reaction 7-carboxy-7-deazaguanine + NH4(+) + ATP = 7-cyano-7-deazaguanine + ADP + phosphate + H2O + H(+). It participates in purine metabolism; 7-cyano-7-deazaguanine biosynthesis. Catalyzes the ATP-dependent conversion of 7-carboxy-7-deazaguanine (CDG) to 7-cyano-7-deazaguanine (preQ(0)). The polypeptide is 7-cyano-7-deazaguanine synthase (Prochlorococcus marinus (strain AS9601)).